An 822-amino-acid polypeptide reads, in one-letter code: Putative ESX-1 scaffolding and assembly protein SaeB (822 aa).

Its function is as follows. May be involved in assembly of the ESX-1 / type VII specialized secretion system (T7SS), which exports several proteins including EsxA and EsxB. Involved in DNA conjugation in recipient (MDK8) but not donor (mc(2)155) strain. The protein is Putative ESX-1 scaffolding and assembly protein SaeB of Mycolicibacterium smegmatis (strain ATCC 700084 / mc(2)155) (Mycobacterium smegmatis).